We begin with the raw amino-acid sequence, 649 residues long: 1-deoxy-D-xylulose-5-phosphate synthase (649 aa).

Thiamine diphosphate-binding positions include His-73 and 114-116 (SHA). A Mg(2+)-binding site is contributed by Asp-145. Residues 146 to 147 (GA), Asn-175, Tyr-286, and Glu-367 each bind thiamine diphosphate. Position 175 (Asn-175) interacts with Mg(2+).

The protein belongs to the transketolase family. DXPS subfamily. In terms of assembly, homodimer. Mg(2+) is required as a cofactor. It depends on thiamine diphosphate as a cofactor.

It carries out the reaction D-glyceraldehyde 3-phosphate + pyruvate + H(+) = 1-deoxy-D-xylulose 5-phosphate + CO2. The protein operates within metabolic intermediate biosynthesis; 1-deoxy-D-xylulose 5-phosphate biosynthesis; 1-deoxy-D-xylulose 5-phosphate from D-glyceraldehyde 3-phosphate and pyruvate: step 1/1. In terms of biological role, catalyzes the acyloin condensation reaction between C atoms 2 and 3 of pyruvate and glyceraldehyde 3-phosphate to yield 1-deoxy-D-xylulose-5-phosphate (DXP). This is 1-deoxy-D-xylulose-5-phosphate synthase from Rhodococcus jostii (strain RHA1).